The following is a 340-amino-acid chain: Farnesyl pyrophosphate synthase 1 (340 aa).

Positions 47, 50, and 85 each coordinate isopentenyl diphosphate. The Mg(2+) site is built by Asp92 and Asp96. Residue Arg101 coordinates dimethylallyl diphosphate. Residue Arg102 coordinates isopentenyl diphosphate. Dimethylallyl diphosphate is bound by residues Lys188, Thr189, Gln227, Lys244, and Lys253.

Belongs to the FPP/GGPP synthase family. Mg(2+) is required as a cofactor. Mainly expressed in trichomes and flowers, and, to a lower extent, in leaves, roots and stems.

Its subcellular location is the cytoplasm. It localises to the nucleus. The enzyme catalyses isopentenyl diphosphate + dimethylallyl diphosphate = (2E)-geranyl diphosphate + diphosphate. It catalyses the reaction isopentenyl diphosphate + (2E)-geranyl diphosphate = (2E,6E)-farnesyl diphosphate + diphosphate. The protein operates within isoprenoid biosynthesis; farnesyl diphosphate biosynthesis; farnesyl diphosphate from geranyl diphosphate and isopentenyl diphosphate: step 1/1. Its pathway is sesquiterpene biosynthesis. It functions in the pathway isoprenoid biosynthesis; geranyl diphosphate biosynthesis; geranyl diphosphate from dimethylallyl diphosphate and isopentenyl diphosphate: step 1/1. Catalyzes the sequential condensation of isopentenyl pyrophosphate with the allylic pyrophosphates, dimethylallyl pyrophosphate, and then with the resultant geranylpyrophosphate to the ultimate product farnesyl pyrophosphate. This chain is Farnesyl pyrophosphate synthase 1, found in Cannabis sativa (Hemp).